Here is a 556-residue protein sequence, read N- to C-terminus: Formate--tetrahydrofolate ligase (556 aa).

65–72 is a binding site for ATP; it reads TPAGEGKS.

This sequence belongs to the formate--tetrahydrofolate ligase family.

It carries out the reaction (6S)-5,6,7,8-tetrahydrofolate + formate + ATP = (6R)-10-formyltetrahydrofolate + ADP + phosphate. It functions in the pathway one-carbon metabolism; tetrahydrofolate interconversion. This is Formate--tetrahydrofolate ligase from Clostridium perfringens (strain 13 / Type A).